The primary structure comprises 355 residues: Peptide chain release factor 1 (355 aa).

Glutamine 233 bears the N5-methylglutamine mark.

It belongs to the prokaryotic/mitochondrial release factor family. In terms of processing, methylated by PrmC. Methylation increases the termination efficiency of RF1.

It is found in the cytoplasm. In terms of biological role, peptide chain release factor 1 directs the termination of translation in response to the peptide chain termination codons UAG and UAA. The polypeptide is Peptide chain release factor 1 (Bacillus cytotoxicus (strain DSM 22905 / CIP 110041 / 391-98 / NVH 391-98)).